A 659-amino-acid polypeptide reads, in one-letter code: Envelope glycoprotein (659 aa).

Positions 1–35 (MLLISNPRHLGHPMSPGNWKRLIILLSCVFGGAEM) are cleaved as a signal peptide. Over 36–606 (NQQHNNPHQP…NRSPWLTTLL (571 aa)) the chain is Extracellular. 2 disulfide bridges follow: cysteine 141–cysteine 162 and cysteine 154–cysteine 167. The interval 278–301 (LSPPASPIPTVQASPPAPSTPSPT) is disordered. The N-linked (GlcNAc...) asparagine; by host glycan is linked to asparagine 318. Disulfide bonds link cysteine 328/cysteine 331, cysteine 328/cysteine 558, and cysteine 550/cysteine 557. The CXXC signature appears at 328 to 331 (CWLC). Residues asparagine 389, asparagine 395, asparagine 407, and asparagine 427 are each glycosylated (N-linked (GlcNAc...) asparagine; by host). Residues 466–486 (VSLTLAVLLGLGVAAGIGTGS) are fusion peptide. Positions 506–532 (AMDTDLRALQDSISKLEDSLTSLSEVV) form a coiled coil. The immunosuppression stretch occupies residues 533 to 549 (LQNRRGLDLLFLKEGGL). A CX6CC motif is present at residues 550-558 (CAALKEECC). Residues 567–587 (VRDSMRRLKERLDKRQLEHQK) are a coiled coil. The chain crosses the membrane as a helical span at residues 607–627 (SALAGPLLLLLLLLTLGPCVI). Residue cysteine 625 is the site of S-palmitoyl cysteine; by host attachment. Over 628 to 659 (NKLVQFINDRVSAVRILVLRHKYQTLDNEDNL) the chain is Cytoplasmic. A YXXL motif; contains endocytosis signal motif is present at residues 650–653 (YQTL).

As to quaternary structure, the mature envelope protein (Env) consists of a trimer of SU-TM heterodimers attached by a labile interchain disulfide bond. In terms of processing, specific enzymatic cleavages in vivo yield mature proteins. Envelope glycoproteins are synthesized as an inactive precursor that is N-glycosylated and processed likely by host cell furin or by a furin-like protease in the Golgi to yield the mature SU and TM proteins. The cleavage site between SU and TM requires the minimal sequence [KR]-X-[KR]-R. The R-peptide is released from the C-terminus of the cytoplasmic tail of the TM protein upon particle formation as a result of proteolytic cleavage by the viral protease. Cleavage of this peptide is required for TM to become fusogenic. The CXXC motif is highly conserved across a broad range of retroviral envelope proteins. It is thought to participate in the formation of a labile disulfide bond possibly with the CX6CC motif present in the transmembrane protein. Isomerization of the intersubunit disulfide bond to an SU intrachain disulfide bond is thought to occur upon receptor recognition in order to allow membrane fusion. Post-translationally, the transmembrane protein is palmitoylated. In terms of processing, the R-peptide is palmitoylated.

It is found in the virion membrane. Its subcellular location is the host cell membrane. Functionally, the surface protein (SU) attaches the virus to the host cell by binding to its receptor. This interaction triggers the refolding of the transmembrane protein (TM) and is thought to activate its fusogenic potential by unmasking its fusion peptide. Fusion occurs at the host cell plasma membrane. The transmembrane protein (TM) acts as a class I viral fusion protein. Under the current model, the protein has at least 3 conformational states: pre-fusion native state, pre-hairpin intermediate state, and post-fusion hairpin state. During viral and target cell membrane fusion, the coiled coil regions (heptad repeats) assume a trimer-of-hairpins structure, positioning the fusion peptide in close proximity to the C-terminal region of the ectodomain. The formation of this structure appears to drive apposition and subsequent fusion of viral and target cell membranes. Membranes fusion leads to delivery of the nucleocapsid into the cytoplasm. The chain is Envelope glycoprotein (env) from Phascolarctos cinereus (Koala).